Reading from the N-terminus, the 258-residue chain is Imidazole glycerol phosphate synthase subunit HisF (258 aa).

Residues Asp11 and Asp130 contribute to the active site.

This sequence belongs to the HisA/HisF family. In terms of assembly, heterodimer of HisH and HisF.

It localises to the cytoplasm. The enzyme catalyses 5-[(5-phospho-1-deoxy-D-ribulos-1-ylimino)methylamino]-1-(5-phospho-beta-D-ribosyl)imidazole-4-carboxamide + L-glutamine = D-erythro-1-(imidazol-4-yl)glycerol 3-phosphate + 5-amino-1-(5-phospho-beta-D-ribosyl)imidazole-4-carboxamide + L-glutamate + H(+). It participates in amino-acid biosynthesis; L-histidine biosynthesis; L-histidine from 5-phospho-alpha-D-ribose 1-diphosphate: step 5/9. IGPS catalyzes the conversion of PRFAR and glutamine to IGP, AICAR and glutamate. The HisF subunit catalyzes the cyclization activity that produces IGP and AICAR from PRFAR using the ammonia provided by the HisH subunit. The protein is Imidazole glycerol phosphate synthase subunit HisF of Blochmanniella pennsylvanica (strain BPEN).